Here is a 93-residue protein sequence, read N- to C-terminus: Pancreatic polypeptide prohormone (93 aa).

A signal peptide spans 1–29; sequence MPAACRCLFLLLLSACVALLLQPPLGTRG. Position 65 is a tyrosine amide (Y65). The propeptide occupies 89–93; the sequence is ELMDE.

Belongs to the NPY family.

The protein resides in the secreted. Functionally, hormone secreted by pancreatic cells that acts as a regulator of pancreatic and gastrointestinal functions probably by signaling through the G protein-coupled receptor NPY4R2. This is Pancreatic polypeptide prohormone (PPY) from Canis lupus familiaris (Dog).